The chain runs to 260 residues: Carbonic anhydrase 2 (260 aa).

Ser2 carries the post-translational modification N-acetylserine. Residue Ser2 is modified to Phosphoserine. Positions 3–259 (HHWGYGEHNG…LKNRQVRVFP (257 aa)) constitute an Alpha-carbonic anhydrase domain. The active-site Proton donor/acceptor is the His64. Zn(2+) contacts are provided by His94, His96, and His119. Phosphoserine is present on residues Ser165 and Ser172. 198-199 (TN) is a binding site for substrate.

Belongs to the alpha-carbonic anhydrase family. In terms of assembly, interacts with SLC4A4 and SLC26A6. Interaction with SLC4A7 regulates SLC4A7 transporter activity. Zn(2+) is required as a cofactor.

It localises to the cytoplasm. The protein resides in the cell membrane. It catalyses the reaction hydrogencarbonate + H(+) = CO2 + H2O. It carries out the reaction urea = cyanamide + H2O. Inhibited by acetazolamide. Its function is as follows. Catalyzes the reversible hydration of carbon dioxide. Can also hydrate cyanamide to urea. Involved in the regulation of fluid secretion into the anterior chamber of the eye. Essential for bone resorption and osteoclast differentiation. Contributes to intracellular pH regulation in the duodenal upper villous epithelium during proton-coupled peptide absorption. Stimulates the chloride-bicarbonate exchange activity of SLC26A6. The chain is Carbonic anhydrase 2 (CA2) from Ovis aries (Sheep).